A 749-amino-acid polypeptide reads, in one-letter code: Tryptophan 2-monooxygenase (749 aa).

FMN is bound by residues Ser232, Glu252, Lys260, and Arg280. Arg280 serves as a coordination point for substrate.

It belongs to the tryptophan 2-monooxygenase family. The cofactor is FMN.

It catalyses the reaction L-tryptophan + O2 = indole-3-acetamide + CO2 + H2O. It participates in plant hormone metabolism; auxin biosynthesis. The sequence is that of Tryptophan 2-monooxygenase (aux1) from Rhizobium rhizogenes (Agrobacterium rhizogenes).